Consider the following 412-residue polypeptide: MDELLIQDPEVGRAVTLEIERQTGKLELIASENFVSAAVRQAQGSVLTHKYAEGYPGKRYYGGCEFVDIAENLAIDRAKAIFGCGYANVQPHSGSQANMGVYFACLKPGDTILGMNLSHGGHLTHGSPVNFSGRLYNVVFYGVKKETGYIDYDEVAALAREHKPTLIVAGASAYPRTIDFARFRAIADEVGAKLMVDMAHIAGLVATGLHPTPIGQAHFTTTTTHKTLRGPRGGMILSDEDNAKTLNSQIFPGIQGGPLMHVIAAKAVAFGEALRPTFVDYQQQVVKNAARLAGCLTAAGYDLVSGGTDNHLMLMDLTAKDITGKDAEHALDKAGMTANKNTVPFETRSPFVTSGVRLGTPALTTRGMKEAEMEKVAAWIVDALANVNNETRLAAISREVEVFARQFPLFAW.

Residues Leu-117 and 121–123 each bind (6S)-5,6,7,8-tetrahydrofolate; that span reads GHL. At Lys-226 the chain carries N6-(pyridoxal phosphate)lysine. 349–351 contacts (6S)-5,6,7,8-tetrahydrofolate; sequence SPF.

Belongs to the SHMT family. In terms of assembly, homodimer. Pyridoxal 5'-phosphate serves as cofactor.

The protein localises to the cytoplasm. The catalysed reaction is (6R)-5,10-methylene-5,6,7,8-tetrahydrofolate + glycine + H2O = (6S)-5,6,7,8-tetrahydrofolate + L-serine. Its pathway is one-carbon metabolism; tetrahydrofolate interconversion. It participates in amino-acid biosynthesis; glycine biosynthesis; glycine from L-serine: step 1/1. Catalyzes the reversible interconversion of serine and glycine with tetrahydrofolate (THF) serving as the one-carbon carrier. This reaction serves as the major source of one-carbon groups required for the biosynthesis of purines, thymidylate, methionine, and other important biomolecules. Also exhibits THF-independent aldolase activity toward beta-hydroxyamino acids, producing glycine and aldehydes, via a retro-aldol mechanism. The polypeptide is Serine hydroxymethyltransferase (Nitratidesulfovibrio vulgaris (strain DSM 19637 / Miyazaki F) (Desulfovibrio vulgaris)).